The following is a 332-amino-acid chain: Nucleoid-associated protein VIBHAR_03026 (332 aa).

The protein belongs to the YejK family.

It localises to the cytoplasm. It is found in the nucleoid. The polypeptide is Nucleoid-associated protein VIBHAR_03026 (Vibrio campbellii (strain ATCC BAA-1116)).